The chain runs to 61 residues: Large ribosomal subunit protein bL32 (61 aa).

Positions 1 to 16 (MAVPKRKTSPSKRGMR) are enriched in basic residues. The segment at 1–41 (MAVPKRKTSPSKRGMRRSADALKASTYVEDKNSGELRRPHH) is disordered. Positions 28-41 (VEDKNSGELRRPHH) are enriched in basic and acidic residues.

This sequence belongs to the bacterial ribosomal protein bL32 family.

This is Large ribosomal subunit protein bL32 from Rhizobium rhizogenes (strain K84 / ATCC BAA-868) (Agrobacterium radiobacter).